The following is a 637-amino-acid chain: tRNA uridine 5-carboxymethylaminomethyl modification enzyme MnmG (637 aa).

Residues 15–20 (GAGHAG), I127, and S182 contribute to the FAD site. NAD(+) is bound at residue 276 to 290 (GPRYCPSIEDKIVRF). FAD is bound at residue Q373.

It belongs to the MnmG family. In terms of assembly, homodimer. Heterotetramer of two MnmE and two MnmG subunits. FAD is required as a cofactor.

The protein localises to the cytoplasm. In terms of biological role, NAD-binding protein involved in the addition of a carboxymethylaminomethyl (cmnm) group at the wobble position (U34) of certain tRNAs, forming tRNA-cmnm(5)s(2)U34. The chain is tRNA uridine 5-carboxymethylaminomethyl modification enzyme MnmG from Streptococcus pneumoniae (strain ATCC BAA-255 / R6).